The chain runs to 2677 residues: Probable helicase senataxin (2677 aa).

Lysine 339 participates in a covalent cross-link: Glycyl lysine isopeptide (Lys-Gly) (interchain with G-Cter in SUMO1). Residues serine 615, serine 642, and serine 878 each carry the phosphoserine modification. Lysine 894 is covalently cross-linked (Glycyl lysine isopeptide (Lys-Gly) (interchain with G-Cter in SUMO2)). Residues serine 911, serine 947, serine 956, serine 1017, and serine 1019 each carry the phosphoserine modification. Residues lysine 1056 and lysine 1063 each participate in a glycyl lysine isopeptide (Lys-Gly) (interchain with G-Cter in SUMO2) cross-link. 2 disordered regions span residues 1158-1219 (KKPK…TTVS) and 1237-1258 (PVSK…RSSN). A compositionally biased stretch (polar residues) spans 1176–1187 (PSSSVRNEGQSD). A compositionally biased stretch (basic and acidic residues) spans 1188–1205 (TNKRDLVGNDFKSIDRRT). The segment covering 1206-1219 (STPNSRIQRATTVS) has biased composition (polar residues). Position 1330 is a phosphoserine (serine 1330). Residues lysine 1340 and lysine 1341 each participate in a glycyl lysine isopeptide (Lys-Gly) (interchain with G-Cter in SUMO2) cross-link. Residues 1351–1385 (QRQIRPKSQKNRRRLSDCESTDVKRAGSHTAQNSD) are disordered. Positions 1354–1363 (IRPKSQKNRR) are enriched in basic residues. Residues 1364–1375 (RLSDCESTDVKR) show a composition bias toward basic and acidic residues. Position 1366 is a phosphoserine (serine 1366). Lysine 1415 participates in a covalent cross-link: Glycyl lysine isopeptide (Lys-Gly) (interchain with G-Cter in SUMO2). Serine 1489 carries the phosphoserine modification. The disordered stretch occupies residues 1579–1604 (FRKPGLPPPASKPLRPTTKIFSSKST). Residues serine 1621, serine 1623, and serine 1663 each carry the phosphoserine modification. ATP is bound at residue 1963–1970 (GPPGTGKS). The Bipartite nuclear localization signal signature appears at 2070–2087 (KKELPSHVQAMHKRKEFL). Residues 2105–2136 (REIQRQELDENISKVSKERQELASKIKEVQGR) adopt a coiled-coil conformation. Threonine 2474 is modified (phosphothreonine). 3 disordered regions span residues 2474 to 2496 (THPP…SKLD), 2556 to 2577 (WDPQ…EPGF), and 2597 to 2677 (LSSH…RKLL). Residues 2560–2573 (PSSPQHPGATPPTG) are compositionally biased toward pro residues. Over residues 2628-2671 (ELCHRREARAFSEGEQEKCGSETHHTRRNSRWDKRTLEQEDSSS) the composition is skewed to basic and acidic residues. Residues 2661 to 2677 (KRTLEQEDSSSKKRKLL) are necessary for nuclear localization.

The protein belongs to the DNA2/NAM7 helicase family. As to quaternary structure, homodimer. Interacts with PER2; the interaction inhibits termination of circadian target genes. Interacts with CHD4, POLR2A, PRKDC and TRIM28. Interacts with UBE2I. Interacts (via N-terminus domain) with EXOSC9 (via C-terminus region); the interaction enhances SETX sumoylation. Interacts with NCL (via N-terminus domain). Interacts with PABPN1, PABPC1 and SF3B1. Interacts with SMN1/SMN2 and POLR2A; SMN1/SMN2 recruits SETX to POLR2A. Post-translationally, ubiquitinated. In terms of processing, sumoylated preferentially with SUMO2 or SUMO3. In terms of tissue distribution, highly expressed in skeletal muscle. Expressed in heart, fibroblast, placenta and liver. Weakly expressed in brain and lung. Expressed in the cortex of the kidney (highly expressed in tubular epithelial cells but low expression in the glomerulus).

Its subcellular location is the nucleus. The protein resides in the nucleoplasm. It is found in the nucleolus. It localises to the cytoplasm. The protein localises to the chromosome. Its subcellular location is the telomere. The protein resides in the cell projection. It is found in the axon. It localises to the growth cone. In terms of biological role, probable RNA/DNA helicase involved in diverse aspects of RNA metabolism and genomic integrity. Plays a role in transcription regulation by its ability to modulate RNA Polymerase II (Pol II) binding to chromatin and through its interaction with proteins involved in transcription. Contributes to the mRNA splicing efficiency and splice site selection. Required for the resolution of R-loop RNA-DNA hybrid formation at G-rich pause sites located downstream of the poly(A) site, allowing XRN2 recruitment and XRN2-mediated degradation of the downstream cleaved RNA and hence efficient RNA polymerase II (RNAp II) transcription termination. Required for the 3' transcriptional termination of PER1 and CRY2, thus playing an important role in the circadian rhythm regulation. Involved in DNA double-strand breaks damage response generated by oxidative stress. In association with RRP45, targets the RNA exosome complex to sites of transcription-induced DNA damage. Plays a role in the development and maturation of germ cells: essential for male meiosis, acting at the interface of transcription and meiotic recombination, and in the process of gene silencing during meiotic sex chromosome inactivation (MSCI). May be involved in telomeric stability through the regulation of telomere repeat-containing RNA (TERRA) transcription. Plays a role in neurite outgrowth in hippocampal cells through FGF8-activated signaling pathways. Inhibits retinoic acid-induced apoptosis. The protein is Probable helicase senataxin of Homo sapiens (Human).